The primary structure comprises 322 residues: Phthalate dioxygenase reductase (322 aa).

Residues 7-109 (DGFLRLKIAS…SLPRNEFPLD (103 aa)) form the FAD-binding FR-type domain. FMN-binding positions include 56-57 (RT), 73-75 (AVK), 81-84 (RGGS), threonine 125, and phenylalanine 226. Positions 239-322 (FTVRLSRSGT…AKSAELVLDL (84 aa)) constitute a 2Fe-2S ferredoxin-type domain. Cysteine 273 lines the [2Fe-2S] cluster pocket. Serine 275 contributes to the FMN binding site. [2Fe-2S] cluster is bound by residues cysteine 278, cysteine 281, and cysteine 309.

Belongs to the PDR/VanB family. In terms of assembly, monomer. The cofactor is FMN.

Component of the electron transfer chain involved in pyridine nucleotide-dependent dihydroxylation of phthalate. Utilizes FMN to mediate electron transfer from the two-electron donor, NADH, to the one-electron acceptor, (2Fe-2S). The chain is Phthalate dioxygenase reductase (ophA1) from Burkholderia cepacia (Pseudomonas cepacia).